The sequence spans 130 residues: Large ribosomal subunit protein bL20 (130 aa).

The protein belongs to the bacterial ribosomal protein bL20 family.

Its function is as follows. Binds directly to 23S ribosomal RNA and is necessary for the in vitro assembly process of the 50S ribosomal subunit. It is not involved in the protein synthesizing functions of that subunit. In Clavibacter michiganensis subsp. michiganensis (strain NCPPB 382), this protein is Large ribosomal subunit protein bL20.